The sequence spans 273 residues: MSQLSTIIEQAFEDRANFTAADCPSEIRQAVEEAIAGLDNGTLRVAEKINGEWVVHQWLKKAVLLSFKLNDNKPIESCDLRFYDKVETKFSGWTEEQFKAAGVRVVPPAVARRGSFQAKNVVLMPSYVNIGAYVDEGTMVDTWATVGSCAQIGKNVHLSGGVGIGGVLEPLQANPTIIEDNCFIGARSEIVEGVIVEEGSVISMGVYIGQSTRIYDRETGEIHYGRVPAGSVVVPGNLPSADGKYSLYAAIIVKKVDAQTRAKTSLNDLLRAD.

This sequence belongs to the transferase hexapeptide repeat family.

The protein localises to the cytoplasm. The enzyme catalyses (S)-2,3,4,5-tetrahydrodipicolinate + succinyl-CoA + H2O = (S)-2-succinylamino-6-oxoheptanedioate + CoA. It functions in the pathway amino-acid biosynthesis; L-lysine biosynthesis via DAP pathway; LL-2,6-diaminopimelate from (S)-tetrahydrodipicolinate (succinylase route): step 1/3. This is 2,3,4,5-tetrahydropyridine-2,6-dicarboxylate N-succinyltransferase from Acinetobacter baumannii (strain AB307-0294).